The sequence spans 149 residues: Ribosome maturation factor RimP (149 aa).

This sequence belongs to the RimP family.

Its subcellular location is the cytoplasm. Its function is as follows. Required for maturation of 30S ribosomal subunits. This is Ribosome maturation factor RimP from Neisseria gonorrhoeae (strain NCCP11945).